Here is a 515-residue protein sequence, read N- to C-terminus: ATP synthase subunit alpha (515 aa).

171–178 is an ATP binding site; that stretch reads GDRQTGKT.

It belongs to the ATPase alpha/beta chains family. F-type ATPases have 2 components, CF(1) - the catalytic core - and CF(0) - the membrane proton channel. CF(1) has five subunits: alpha(3), beta(3), gamma(1), delta(1), epsilon(1). CF(0) has three main subunits: a(1), b(2) and c(9-12). The alpha and beta chains form an alternating ring which encloses part of the gamma chain. CF(1) is attached to CF(0) by a central stalk formed by the gamma and epsilon chains, while a peripheral stalk is formed by the delta and b chains.

Its subcellular location is the cell inner membrane. It carries out the reaction ATP + H2O + 4 H(+)(in) = ADP + phosphate + 5 H(+)(out). In terms of biological role, produces ATP from ADP in the presence of a proton gradient across the membrane. The alpha chain is a regulatory subunit. This Xanthomonas axonopodis pv. citri (strain 306) protein is ATP synthase subunit alpha.